The primary structure comprises 152 residues: Deoxyuridine 5'-triphosphate nucleotidohydrolase (152 aa).

Substrate is bound by residues 71–73 (RSG), N84, 88–90 (LID), and M98.

It belongs to the dUTPase family. Requires Mg(2+) as cofactor.

It carries out the reaction dUTP + H2O = dUMP + diphosphate + H(+). It participates in pyrimidine metabolism; dUMP biosynthesis; dUMP from dCTP (dUTP route): step 2/2. In terms of biological role, this enzyme is involved in nucleotide metabolism: it produces dUMP, the immediate precursor of thymidine nucleotides and it decreases the intracellular concentration of dUTP so that uracil cannot be incorporated into DNA. The polypeptide is Deoxyuridine 5'-triphosphate nucleotidohydrolase (Citrobacter koseri (strain ATCC BAA-895 / CDC 4225-83 / SGSC4696)).